Reading from the N-terminus, the 60-residue chain is Large ribosomal subunit protein uL29 (60 aa).

The protein belongs to the universal ribosomal protein uL29 family.

The protein is Large ribosomal subunit protein uL29 of Fusobacterium nucleatum subsp. nucleatum (strain ATCC 25586 / DSM 15643 / BCRC 10681 / CIP 101130 / JCM 8532 / KCTC 2640 / LMG 13131 / VPI 4355).